We begin with the raw amino-acid sequence, 226 residues long: Large ribosomal subunit protein uL1 (226 aa).

The protein belongs to the universal ribosomal protein uL1 family. Part of the 50S ribosomal subunit.

In terms of biological role, binds directly to 23S rRNA. The L1 stalk is quite mobile in the ribosome, and is involved in E site tRNA release. Its function is as follows. Protein L1 is also a translational repressor protein, it controls the translation of the L11 operon by binding to its mRNA. The sequence is that of Large ribosomal subunit protein uL1 from Borreliella burgdorferi (strain ATCC 35210 / DSM 4680 / CIP 102532 / B31) (Borrelia burgdorferi).